Reading from the N-terminus, the 187-residue chain is Abscisic acid receptor PYL9 (187 aa).

Residues 27-178 (HLCRENQCTS…NLKSLADVSE (152 aa)) are START-like. Intrachain disulfides connect C29/C159 and C34/C159. Abscisate-binding positions include K63, 91–96 (ATTSTE), 118–124 (RLKNYSS), and E143. The short motif at 87–91 (SGLPA) is the Gate loop element. A Latch loop motif is present at residues 117-119 (HRL).

It belongs to the PYR/PYL/RCAR abscisic acid intracellular receptor family. In terms of assembly, homodimer. Monomer. Binds ABA on one subunit only. Binds to CARs protein in an ABA-independent manner, both at the plasma membrane and in the nucleus. Binds specifically (+)-ABA but not (-)-ABA. Interacts with HAB1, ABI1 and ABI2, and possibly with other PP2Cs. Interacts with TOPP1. Interacts with DDA1. In terms of tissue distribution, expressed in root tips, vascular tissues, stomata, flowers, pollen tubes and developing seeds.

Its subcellular location is the cytoplasm. It is found in the nucleus. The protein resides in the cell membrane. Receptor for abscisic acid (ABA) required for ABA-mediated responses such as stomatal closure and germination inhibition. Inhibits the activity of group-A protein phosphatases type 2C (PP2Cs) in an ABA-independent manner but more efficiently when activated by ABA. Confers enhanced sensitivity to ABA. Can be activated only by (+)-ABA but not by (-)-ABA. The sequence is that of Abscisic acid receptor PYL9 (PYL9) from Arabidopsis thaliana (Mouse-ear cress).